The chain runs to 496 residues: Lysine--tRNA ligase (496 aa).

Mg(2+)-binding residues include Glu409 and Glu416.

It belongs to the class-II aminoacyl-tRNA synthetase family. As to quaternary structure, homodimer. Mg(2+) is required as a cofactor.

It is found in the cytoplasm. The catalysed reaction is tRNA(Lys) + L-lysine + ATP = L-lysyl-tRNA(Lys) + AMP + diphosphate. The sequence is that of Lysine--tRNA ligase from Streptococcus gordonii (strain Challis / ATCC 35105 / BCRC 15272 / CH1 / DL1 / V288).